A 185-amino-acid polypeptide reads, in one-letter code: Elongation factor P (185 aa).

The protein belongs to the elongation factor P family.

The protein localises to the cytoplasm. It functions in the pathway protein biosynthesis; polypeptide chain elongation. Involved in peptide bond synthesis. Stimulates efficient translation and peptide-bond synthesis on native or reconstituted 70S ribosomes in vitro. Probably functions indirectly by altering the affinity of the ribosome for aminoacyl-tRNA, thus increasing their reactivity as acceptors for peptidyl transferase. The polypeptide is Elongation factor P (Bacillus anthracis (strain CDC 684 / NRRL 3495)).